The sequence spans 447 residues: Oxysterols receptor LXR-alpha (447 aa).

Disordered stretches follow at residues 1–37 (MSLW…GGSS) and 65–88 (ALLT…KKGP). Residues 1 to 96 (MSLWLGAPVP…GPAPKMLGNE (96 aa)) are transactivation AF-1; required for ligand-independent transactivation function. Residues 24–37 (GAQDASSQAQGGSS) show a composition bias toward low complexity. The nuclear receptor DNA-binding region spans 95–170 (NELCSVCGDK…AGMREECVLS (76 aa)). 2 NR C4-type zinc fingers span residues 98-118 (CSVC…CEGC) and 134-158 (CHSG…LRKC). Residues 180–202 (KRQEEEQAHATSLPPRASSPPQI) are disordered. The interval 205–447 (QLSPEQLGMI…LLSEIWDVHE (243 aa)) is transactivation AF-2; required for ligand-dependent transactivation function; mediates interaction with CCAR2. An NR LBD domain is found at 209 to 447 (EQLGMIEKLV…LLSEIWDVHE (239 aa)).

It belongs to the nuclear hormone receptor family. NR1 subfamily. In terms of assembly, heterodimer of NR1H3 and RXR (retinoic acid receptor). Interacts with CCAR2 (via N-terminus) in a ligand-independent manner. Interacts with SIRT1 and this interaction is inhibited by CCAR2. Interacts with GPS2. Ubiquitinated by UBR5, leading to its degradation: UBR5 specifically recognizes and binds ligand-bound NR1H3 when it is not associated with coactivators (NCOAs). In presence of NCOAs, the UBR5-degron is not accessible, preventing its ubiquitination and degradation. Visceral organs specific expression. Strong expression was found in liver, kidney and intestine followed by spleen and to a lesser extent the adrenals.

It is found in the nucleus. The protein localises to the cytoplasm. Its function is as follows. Nuclear receptor that exhibits a ligand-dependent transcriptional activation activity. Interaction with retinoic acid receptor (RXR) shifts RXR from its role as a silent DNA-binding partner to an active ligand-binding subunit in mediating retinoid responses through target genes defined by LXRES. LXRES are DR4-type response elements characterized by direct repeats of two similar hexanuclotide half-sites spaced by four nucleotides. Plays an important role in the regulation of cholesterol homeostasis, regulating cholesterol uptake through MYLIP-dependent ubiquitination of LDLR, VLDLR and LRP8. Interplays functionally with RORA for the regulation of genes involved in liver metabolism. Induces LPCAT3-dependent phospholipid remodeling in endoplasmic reticulum (ER) membranes of hepatocytes, driving SREBF1 processing and lipogenesis. Via LPCAT3, triggers the incorporation of arachidonate into phosphatidylcholines of ER membranes, increasing membrane dynamics and enabling triacylglycerols transfer to nascent very low-density lipoprotein (VLDL) particles. Via LPCAT3 also counteracts lipid-induced ER stress response and inflammation, likely by modulating SRC kinase membrane compartmentalization and limiting the synthesis of lipid inflammatory mediators. This Homo sapiens (Human) protein is Oxysterols receptor LXR-alpha (NR1H3).